A 64-amino-acid polypeptide reads, in one-letter code: Large ribosomal subunit protein bL35 (64 aa).

The disordered stretch occupies residues 19-41 (SGKVKRERMNGSHNLEHKNRKRT). The segment covering 25-35 (ERMNGSHNLEH) has biased composition (basic and acidic residues).

Belongs to the bacterial ribosomal protein bL35 family.

This Chlorobaculum tepidum (strain ATCC 49652 / DSM 12025 / NBRC 103806 / TLS) (Chlorobium tepidum) protein is Large ribosomal subunit protein bL35.